Here is a 294-residue protein sequence, read N- to C-terminus: tRNA dimethylallyltransferase (294 aa).

Residue 10–17 (GPTAVGKT) participates in ATP binding. 12 to 17 (TAVGKT) provides a ligand contact to substrate. An interaction with substrate tRNA region spans residues 35 to 38 (DSQQ).

It belongs to the IPP transferase family. Monomer. Requires Mg(2+) as cofactor.

The enzyme catalyses adenosine(37) in tRNA + dimethylallyl diphosphate = N(6)-dimethylallyladenosine(37) in tRNA + diphosphate. Its function is as follows. Catalyzes the transfer of a dimethylallyl group onto the adenine at position 37 in tRNAs that read codons beginning with uridine, leading to the formation of N6-(dimethylallyl)adenosine (i(6)A). The polypeptide is tRNA dimethylallyltransferase (Streptococcus pneumoniae (strain ATCC 700669 / Spain 23F-1)).